The chain runs to 198 residues: NADH-quinone oxidoreductase subunit B (198 aa).

[4Fe-4S] cluster is bound by residues C62, C63, C128, and C158.

This sequence belongs to the complex I 20 kDa subunit family. As to quaternary structure, NDH-1 is composed of 14 different subunits. Subunits NuoB, C, D, E, F, and G constitute the peripheral sector of the complex. Requires [4Fe-4S] cluster as cofactor.

The protein resides in the cell inner membrane. It carries out the reaction a quinone + NADH + 5 H(+)(in) = a quinol + NAD(+) + 4 H(+)(out). In terms of biological role, NDH-1 shuttles electrons from NADH, via FMN and iron-sulfur (Fe-S) centers, to quinones in the respiratory chain. The immediate electron acceptor for the enzyme in this species is believed to be a menaquinone. Couples the redox reaction to proton translocation (for every two electrons transferred, four hydrogen ions are translocated across the cytoplasmic membrane), and thus conserves the redox energy in a proton gradient. This chain is NADH-quinone oxidoreductase subunit B, found in Phocaeicola vulgatus (strain ATCC 8482 / DSM 1447 / JCM 5826 / CCUG 4940 / NBRC 14291 / NCTC 11154) (Bacteroides vulgatus).